The chain runs to 167 residues: Phosphopantetheine adenylyltransferase (167 aa).

Thr13 is a binding site for substrate. Residues 13–14 (TF) and His21 contribute to the ATP site. Substrate is bound by residues Lys45, Leu78, and Arg92. Residues 93 to 95 (GLR), Glu103, and 128 to 134 (TQFISSS) each bind ATP.

This sequence belongs to the bacterial CoaD family. As to quaternary structure, homohexamer. It depends on Mg(2+) as a cofactor.

The protein resides in the cytoplasm. The enzyme catalyses (R)-4'-phosphopantetheine + ATP + H(+) = 3'-dephospho-CoA + diphosphate. It functions in the pathway cofactor biosynthesis; coenzyme A biosynthesis; CoA from (R)-pantothenate: step 4/5. In terms of biological role, reversibly transfers an adenylyl group from ATP to 4'-phosphopantetheine, yielding dephospho-CoA (dPCoA) and pyrophosphate. The sequence is that of Phosphopantetheine adenylyltransferase from Wolbachia sp. subsp. Brugia malayi (strain TRS).